A 1070-amino-acid chain; its full sequence is DNA-directed RNA polymerase subunit beta (1070 aa).

The protein belongs to the RNA polymerase beta chain family. In plastids the minimal PEP RNA polymerase catalytic core is composed of four subunits: alpha, beta, beta', and beta''. When a (nuclear-encoded) sigma factor is associated with the core the holoenzyme is formed, which can initiate transcription.

It is found in the plastid. The protein localises to the chloroplast. The enzyme catalyses RNA(n) + a ribonucleoside 5'-triphosphate = RNA(n+1) + diphosphate. Its function is as follows. DNA-dependent RNA polymerase catalyzes the transcription of DNA into RNA using the four ribonucleoside triphosphates as substrates. This chain is DNA-directed RNA polymerase subunit beta, found in Chaetosphaeridium globosum (Charophycean green alga).